The following is a 350-amino-acid chain: Anthranilate phosphoribosyltransferase (350 aa).

5-phospho-alpha-D-ribose 1-diphosphate contacts are provided by residues Gly-81, 84-85 (GD), Thr-89, 91-94 (NIST), 109-117 (KHGGRSVSS), and Ser-121. Gly-81 contacts anthranilate. Mg(2+) is bound at residue Ser-93. Arg-167 is a binding site for anthranilate. Residues Asp-230 and Glu-231 each contribute to the Mg(2+) site.

This sequence belongs to the anthranilate phosphoribosyltransferase family. Homodimer. Mg(2+) serves as cofactor.

The enzyme catalyses N-(5-phospho-beta-D-ribosyl)anthranilate + diphosphate = 5-phospho-alpha-D-ribose 1-diphosphate + anthranilate. Its pathway is amino-acid biosynthesis; L-tryptophan biosynthesis; L-tryptophan from chorismate: step 2/5. In terms of biological role, catalyzes the transfer of the phosphoribosyl group of 5-phosphorylribose-1-pyrophosphate (PRPP) to anthranilate to yield N-(5'-phosphoribosyl)-anthranilate (PRA). In Nitrosospira multiformis (strain ATCC 25196 / NCIMB 11849 / C 71), this protein is Anthranilate phosphoribosyltransferase.